Here is a 375-residue protein sequence, read N- to C-terminus: Succinyl-diaminopimelate desuccinylase (375 aa).

H66 provides a ligand contact to Zn(2+). D68 is a catalytic residue. Zn(2+) is bound at residue D99. The Proton acceptor role is filled by E133. Residues E134, E162, and H348 each contribute to the Zn(2+) site.

Belongs to the peptidase M20A family. DapE subfamily. In terms of assembly, homodimer. Zn(2+) serves as cofactor. The cofactor is Co(2+).

It carries out the reaction N-succinyl-(2S,6S)-2,6-diaminopimelate + H2O = (2S,6S)-2,6-diaminopimelate + succinate. It participates in amino-acid biosynthesis; L-lysine biosynthesis via DAP pathway; LL-2,6-diaminopimelate from (S)-tetrahydrodipicolinate (succinylase route): step 3/3. Its function is as follows. Catalyzes the hydrolysis of N-succinyl-L,L-diaminopimelic acid (SDAP), forming succinate and LL-2,6-diaminopimelate (DAP), an intermediate involved in the bacterial biosynthesis of lysine and meso-diaminopimelic acid, an essential component of bacterial cell walls. The chain is Succinyl-diaminopimelate desuccinylase from Yersinia pseudotuberculosis serotype O:1b (strain IP 31758).